We begin with the raw amino-acid sequence, 330 residues long: DNA repair and recombination protein RadA (330 aa).

124–131 (GEFGSGKT) is a binding site for ATP.

Belongs to the eukaryotic RecA-like protein family.

Involved in DNA repair and in homologous recombination. Binds and assemble on single-stranded DNA to form a nucleoprotein filament. Hydrolyzes ATP in a ssDNA-dependent manner and promotes DNA strand exchange between homologous DNA molecules. In Pyrobaculum neutrophilum (strain DSM 2338 / JCM 9278 / NBRC 100436 / V24Sta) (Thermoproteus neutrophilus), this protein is DNA repair and recombination protein RadA.